Here is a 421-residue protein sequence, read N- to C-terminus: Aspartokinase (421 aa).

7 to 10 (KYGG) contacts ATP. Substrate is bound at residue 25-30 (RIVATK). Serine 41 contacts ATP. Substrate contacts are provided by residues 45–49 (DTTDE), glutamate 74, 125–126 (LD), 151–154 (RGGS), and serine 154. ATP is bound by residues 174–175 (SD), 180–185 (YTADPR), and lysine 210. 2 consecutive ACT domains span residues 267-343 (VTVL…YDDQ) and 349-421 (LVGA…GTGR). Residues aspartate 274, 274–279 (DKPGEA), 292–294 (NID), glutamine 298, 360–361 (VT), 374–375 (NI), and 381–382 (SE) each bind substrate.

It belongs to the aspartokinase family. In terms of assembly, tetramer consisting of 2 isoforms Alpha (catalytic and regulation) and of a homodimer of 2 isoforms Beta (regulation). The dimerization of the beta isoforms is stabilized by the bonding of threonine.

The enzyme catalyses L-aspartate + ATP = 4-phospho-L-aspartate + ADP. Its pathway is amino-acid biosynthesis; L-lysine biosynthesis via DAP pathway; (S)-tetrahydrodipicolinate from L-aspartate: step 1/4. The protein operates within amino-acid biosynthesis; L-methionine biosynthesis via de novo pathway; L-homoserine from L-aspartate: step 1/3. It functions in the pathway amino-acid biosynthesis; L-threonine biosynthesis; L-threonine from L-aspartate: step 1/5. With respect to regulation, feedback inhibition by lysine and threonine, but he enzyme is moderately inhibited by lysine alone, and threonine alone has no effect. Functionally, catalyzes the phosphorylation of the beta-carboxyl group of aspartic acid with ATP to yield 4-phospho-L-aspartate, which is involved in the branched biosynthetic pathway leading to the biosynthesis of amino acids lysine, threonine, isoleucine and methionine. This chain is Aspartokinase (lysC), found in Corynebacterium glutamicum (strain ATCC 13032 / DSM 20300 / JCM 1318 / BCRC 11384 / CCUG 27702 / LMG 3730 / NBRC 12168 / NCIMB 10025 / NRRL B-2784 / 534).